The chain runs to 534 residues: NAD(P)H-quinone oxidoreductase chain 4 2 (534 aa).

The next 14 membrane-spanning stretches (helical) occupy residues 9–29 (FPWLTTVIAYPVLAALFIPLI), 51–71 (WFALFIAVTDLLILLAGFYVG), 106–126 (LILLTAFITTLAILAAWPVTL), 130–150 (LFYFLMLAMYGGQIGVFAVQD), 152–172 (LLFFLMWELELIPVYLLLSIW), 184–204 (FILYTALSSLFILVAGLAMAF), 227–247 (LLMYGAFLIAYGVKLPIFPLH), 258–278 (TAPVHMLLAGILLKMGGYALM), 290–310 (LYFAPVLIVLGVVNIIFAALT), 326–346 (ISHMGFVLIGIGSLTEIGMSG), 347–367 (AMLQMISHGLIGASLFFLVGA), 399–419 (LASLALPGMSGFVAEIMVFIG), 432–452 (LVVVFLAAVGVILTPIYLLSM), and 479–499 (VFIIACLLIPIIGIGLYPKLV).

The protein belongs to the complex I subunit 4 family.

Its subcellular location is the cellular thylakoid membrane. The enzyme catalyses a plastoquinone + NADH + (n+1) H(+)(in) = a plastoquinol + NAD(+) + n H(+)(out). It carries out the reaction a plastoquinone + NADPH + (n+1) H(+)(in) = a plastoquinol + NADP(+) + n H(+)(out). Its function is as follows. NDH-1 shuttles electrons from NAD(P)H, via FMN and iron-sulfur (Fe-S) centers, to quinones in the respiratory chain. The immediate electron acceptor for the enzyme in this species is believed to be plastoquinone. Couples the redox reaction to proton translocation (for every two electrons transferred, four hydrogen ions are translocated across the cytoplasmic membrane), and thus conserves the redox energy in a proton gradient. In Synechococcus sp. (strain JA-2-3B'a(2-13)) (Cyanobacteria bacterium Yellowstone B-Prime), this protein is NAD(P)H-quinone oxidoreductase chain 4 2.